An 837-amino-acid polypeptide reads, in one-letter code: Protein translocase subunit SecA (837 aa).

ATP-binding positions include Q85, 103-107, and D493; that span reads GEGKT. Positions 821, 823, 832, and 833 each coordinate Zn(2+).

The protein belongs to the SecA family. In terms of assembly, monomer and homodimer. Part of the essential Sec protein translocation apparatus which comprises SecA, SecYEG and auxiliary proteins SecDF. Other proteins may also be involved. Zn(2+) is required as a cofactor.

It localises to the cell membrane. It is found in the cytoplasm. It catalyses the reaction ATP + H2O + cellular proteinSide 1 = ADP + phosphate + cellular proteinSide 2.. Functionally, part of the Sec protein translocase complex. Interacts with the SecYEG preprotein conducting channel. Has a central role in coupling the hydrolysis of ATP to the transfer of proteins into and across the cell membrane, serving as an ATP-driven molecular motor driving the stepwise translocation of polypeptide chains across the membrane. This chain is Protein translocase subunit SecA, found in Streptococcus pneumoniae (strain Taiwan19F-14).